The following is a 286-amino-acid chain: Protein WVD2-like 1 (286 aa).

The disordered stretch occupies residues 31 to 101 (ETDEEFEVKE…ENKKHIDDED (71 aa)). A Phosphothreonine modification is found at Thr-32. Residues 38-47 (VKECTEEKSL) are compositionally biased toward basic and acidic residues. A coiled-coil region spans residues 131 to 182 (AQRAEKRKEYYQKLEEKNQALEAERNELEQRQKDEQEAALKQLRKNLKFKAK). Positions 186–286 (NFYYEAPPAK…KPVNESSEEA (101 aa)) are disordered. Residues 234–247 (TVSNRNRHSTGTVQ) show a composition bias toward polar residues.

Belongs to the TPX2 family.

It is found in the cytoplasm. The protein resides in the cytoskeleton. Functionally, microtubule-associated protein (MAP) that regulates the orientation of interphase cortical microtubules. Modulates both rotational polarity and anisotropic cell expansion during organ growth. Promotes clockwise root and etiolated hypocotyls coiling, clockwise leaf curling, but left-handed petiole twisting. This is Protein WVD2-like 1 (WDL1) from Arabidopsis thaliana (Mouse-ear cress).